Here is a 204-residue protein sequence, read N- to C-terminus: N-(5'-phosphoribosyl)anthranilate isomerase (204 aa).

Belongs to the TrpF family.

It carries out the reaction N-(5-phospho-beta-D-ribosyl)anthranilate = 1-(2-carboxyphenylamino)-1-deoxy-D-ribulose 5-phosphate. The protein operates within amino-acid biosynthesis; L-tryptophan biosynthesis; L-tryptophan from chorismate: step 3/5. This chain is N-(5'-phosphoribosyl)anthranilate isomerase, found in Bacillus mycoides (strain KBAB4) (Bacillus weihenstephanensis).